The following is a 256-amino-acid chain: Protein YIPF5 (256 aa).

Residues 1-125 (MSNFDNFNTD…ADGSIMNETD (125 aa)) are Cytoplasmic-facing. A helical membrane pass occupies residues 126–146 (LAGPMVFCLAFGATLLLAGKI). A topological domain (lumenal) is located at residue Q147. Residues 148 to 168 (FGYVYGISAMGCLGMYCLLNL) form a helical membrane-spanning segment. Topologically, residues 169–172 (MSMT) are cytoplasmic. Residues 173-193 (GVSFGCVSSVLGYCLLPMIIL) form a helical membrane-spanning segment. The Lumenal segment spans residues 194 to 195 (ST). Residues 196–216 (FAVIFSLQGILGIVLAALIIG) form a helical membrane-spanning segment. The Cytoplasmic portion of the chain corresponds to 217-235 (WCSFSASKIFISALAMDGQ). A helical transmembrane segment spans residues 236–256 (QLLVAYPCALLYGVFALISVF).

The protein belongs to the YIP1 family.

It is found in the endoplasmic reticulum membrane. Its subcellular location is the golgi apparatus. It localises to the cis-Golgi network membrane. In terms of biological role, plays a role in transport between endoplasmic reticulum and Golgi. The sequence is that of Protein YIPF5 (yipf5) from Xenopus laevis (African clawed frog).